The primary structure comprises 428 residues: GTPase Obg (428 aa).

Residues 1-158 enclose the Obg domain; that stretch reads MFVDQVKIYV…RDVILELKVL (158 aa). The segment at 117–145 is disordered; the sequence is ARGGRGGRGNSRFATPTNPAPEIAENGEP. In terms of domain architecture, OBG-type G spans 159-329; it reads ADVGLVGFPS…LLFEVANLLE (171 aa). Residues 165-172, 190-194, 212-215, 282-285, and 310-312 each bind GTP; these read GFPSVGKS, FTTIV, DLPG, NKMD, and SAV. Mg(2+) contacts are provided by serine 172 and threonine 192. Residues 350-428 form the OCT domain; it reads KLETEGVKFD…ILEYEFEFID (79 aa).

Belongs to the TRAFAC class OBG-HflX-like GTPase superfamily. OBG GTPase family. Monomer. Mg(2+) is required as a cofactor.

It is found in the cytoplasm. Its function is as follows. An essential GTPase which binds GTP, GDP and possibly (p)ppGpp with moderate affinity, with high nucleotide exchange rates and a fairly low GTP hydrolysis rate. Plays a role in control of the cell cycle, stress response, ribosome biogenesis and in those bacteria that undergo differentiation, in morphogenesis control. In Bacillus cereus (strain ATCC 10987 / NRS 248), this protein is GTPase Obg.